The following is a 346-amino-acid chain: E3 ubiquitin-protein ligase MARCHF9 (346 aa).

Disordered regions lie at residues Gly-20 to Gly-39 and Ser-47 to Leu-92. Basic and acidic residues predominate over residues Pro-63–Arg-75. Residues Gly-77–Gly-90 show a composition bias toward pro residues. The RING-CH-type zinc-finger motif lies at Asp-102–Leu-162. The Zn(2+) site is built by Cys-110, Cys-113, Cys-126, Cys-128, His-136, Cys-139, Cys-152, and Cys-155. The next 2 helical transmembrane spans lie at Ile-185–Ser-205 and Leu-219–Ile-239. Disordered stretches follow at residues Asp-273–Ala-301 and Pro-326–Val-346. Over residues Pro-284 to Thr-296 the composition is skewed to polar residues.

Homodimer. In terms of tissue distribution, ubiquitously expressed.

Its subcellular location is the golgi apparatus membrane. The protein localises to the lysosome membrane. The enzyme catalyses S-ubiquitinyl-[E2 ubiquitin-conjugating enzyme]-L-cysteine + [acceptor protein]-L-lysine = [E2 ubiquitin-conjugating enzyme]-L-cysteine + N(6)-ubiquitinyl-[acceptor protein]-L-lysine.. It functions in the pathway protein modification; protein ubiquitination. Its function is as follows. E3 ubiquitin-protein ligase that may mediate ubiquitination of MHC-I, CD4 and ICAM1, and promote their subsequent endocytosis and sorting to lysosomes via multivesicular bodies. E3 ubiquitin ligases accept ubiquitin from an E2 ubiquitin-conjugating enzyme in the form of a thioester and then directly transfer the ubiquitin to targeted substrates. This Homo sapiens (Human) protein is E3 ubiquitin-protein ligase MARCHF9.